Consider the following 315-residue polypeptide: Olfactory receptor 5M10 (315 aa).

The Extracellular segment spans residues 1-25 (MLSPNHTIVTEFILLGLTDDPVLEK). Asn-5 carries N-linked (GlcNAc...) asparagine glycosylation. The helical transmembrane segment at 26–46 (ILFGVFLAIYLITLAGNLCMI) threads the bilayer. The Cytoplasmic segment spans residues 47-54 (LLIRTNSQ). The chain crosses the membrane as a helical span at residues 55–75 (LQTPMYFFLGHLSFVDICYSS). Topologically, residues 76–99 (NVTPNMLHNFLSEQKTISYAGCFT) are extracellular. A disulfide bond links Cys-97 and Cys-189. The helical transmembrane segment at 100–120 (QCLLFIALVITEFYFLASMAL) threads the bilayer. Residues 121-139 (DRYVAICSPLHYSSRMSKN) lie on the Cytoplasmic side of the membrane. A helical membrane pass occupies residues 140–160 (ICISLVTVPYMYGFLNGLSQT). Residues 161–196 (LLTFHLSFCGSLEINHFYCADPPLIMLACSDTRVKK) lie on the Extracellular side of the membrane. The chain crosses the membrane as a helical span at residues 197 to 217 (MAMFVVAGFTLSSSLFIILLS). Residues 218-237 (YLFIFAAIFRIRSAEGRHKA) lie on the Cytoplasmic side of the membrane. Residues 238 to 258 (FSTCASHLTIVTLFYGTLFCM) traverse the membrane as a helical segment. Residues 259-271 (YVRPPSEKSVEES) are Extracellular-facing. The chain crosses the membrane as a helical span at residues 272 to 292 (KIIAVFYTFLSPMLNPLIYSL). Over 293–315 (RNRDVILAIQQMIRGKSFCKIAV) the chain is Cytoplasmic.

It belongs to the G-protein coupled receptor 1 family.

It localises to the cell membrane. Functionally, odorant receptor. In Homo sapiens (Human), this protein is Olfactory receptor 5M10 (OR5M10).